A 127-amino-acid polypeptide reads, in one-letter code: Small ribosomal subunit protein uS11 (127 aa).

Belongs to the universal ribosomal protein uS11 family. In terms of assembly, part of the 30S ribosomal subunit.

Its function is as follows. Located on the platform of the 30S subunit. The sequence is that of Small ribosomal subunit protein uS11 from Picrophilus torridus (strain ATCC 700027 / DSM 9790 / JCM 10055 / NBRC 100828 / KAW 2/3).